The primary structure comprises 402 residues: NADH-quinone oxidoreductase subunit D (402 aa).

This sequence belongs to the complex I 49 kDa subunit family. NDH-1 is composed of 14 different subunits. Subunits NuoB, C, D, E, F, and G constitute the peripheral sector of the complex.

The protein localises to the cell inner membrane. The enzyme catalyses a quinone + NADH + 5 H(+)(in) = a quinol + NAD(+) + 4 H(+)(out). NDH-1 shuttles electrons from NADH, via FMN and iron-sulfur (Fe-S) centers, to quinones in the respiratory chain. The immediate electron acceptor for the enzyme in this species is believed to be ubiquinone. Couples the redox reaction to proton translocation (for every two electrons transferred, four hydrogen ions are translocated across the cytoplasmic membrane), and thus conserves the redox energy in a proton gradient. The polypeptide is NADH-quinone oxidoreductase subunit D (Xanthobacter autotrophicus (strain ATCC BAA-1158 / Py2)).